The sequence spans 67 residues: ATP synthase F(0) complex subunit 8 (67 aa).

The helical transmembrane segment at 8–24 (PWFITILSMIITLFILF) threads the bilayer. The residue at position 54 (lysine 54) is an N6-acetyllysine; alternate. Lysine 54 bears the N6-succinyllysine; alternate mark. Lysine 57 bears the N6-acetyllysine mark.

The protein belongs to the ATPase protein 8 family. As to quaternary structure, component of the ATP synthase complex composed at least of ATP5F1A/subunit alpha, ATP5F1B/subunit beta, ATP5MC1/subunit c (homooctomer), MT-ATP6/subunit a, MT-ATP8/subunit 8, ATP5ME/subunit e, ATP5MF/subunit f, ATP5MG/subunit g, ATP5MK/subunit k, ATP5MJ/subunit j, ATP5F1C/subunit gamma, ATP5F1D/subunit delta, ATP5F1E/subunit epsilon, ATP5PF/subunit F6, ATP5PB/subunit b, ATP5PD/subunit d, ATP5PO/subunit OSCP. ATP synthase complex consists of a soluble F(1) head domain (subunits alpha(3) and beta(3)) - the catalytic core - and a membrane F(0) domain - the membrane proton channel (subunits c, a, 8, e, f, g, k and j). These two domains are linked by a central stalk (subunits gamma, delta, and epsilon) rotating inside the F1 region and a stationary peripheral stalk (subunits F6, b, d, and OSCP). Interacts with PRICKLE3.

Its subcellular location is the mitochondrion membrane. In terms of biological role, subunit 8, of the mitochondrial membrane ATP synthase complex (F(1)F(0) ATP synthase or Complex V) that produces ATP from ADP in the presence of a proton gradient across the membrane which is generated by electron transport complexes of the respiratory chain. ATP synthase complex consist of a soluble F(1) head domain - the catalytic core - and a membrane F(1) domain - the membrane proton channel. These two domains are linked by a central stalk rotating inside the F(1) region and a stationary peripheral stalk. During catalysis, ATP synthesis in the catalytic domain of F(1) is coupled via a rotary mechanism of the central stalk subunits to proton translocation. In vivo, can only synthesize ATP although its ATP hydrolase activity can be activated artificially in vitro. Part of the complex F(0) domain. This Orycteropus afer (Aardvark) protein is ATP synthase F(0) complex subunit 8.